Reading from the N-terminus, the 891-residue chain is Alanine--tRNA ligase (891 aa).

Residues histidine 576, histidine 580, cysteine 684, and histidine 688 each coordinate Zn(2+).

Belongs to the class-II aminoacyl-tRNA synthetase family. Requires Zn(2+) as cofactor.

It localises to the cytoplasm. It carries out the reaction tRNA(Ala) + L-alanine + ATP = L-alanyl-tRNA(Ala) + AMP + diphosphate. Catalyzes the attachment of alanine to tRNA(Ala) in a two-step reaction: alanine is first activated by ATP to form Ala-AMP and then transferred to the acceptor end of tRNA(Ala). Also edits incorrectly charged Ser-tRNA(Ala) and Gly-tRNA(Ala) via its editing domain. The sequence is that of Alanine--tRNA ligase from Orientia tsutsugamushi (strain Boryong) (Rickettsia tsutsugamushi).